We begin with the raw amino-acid sequence, 135 residues long: ATP synthase epsilon chain, chloroplastic (135 aa).

Belongs to the ATPase epsilon chain family. F-type ATPases have 2 components, CF(1) - the catalytic core - and CF(0) - the membrane proton channel. CF(1) has five subunits: alpha(3), beta(3), gamma(1), delta(1), epsilon(1). CF(0) has three main subunits: a, b and c.

It localises to the plastid. The protein resides in the chloroplast thylakoid membrane. Produces ATP from ADP in the presence of a proton gradient across the membrane. The sequence is that of ATP synthase epsilon chain, chloroplastic from Stigeoclonium helveticum (Green alga).